Reading from the N-terminus, the 623-residue chain is Peptidoglycan D,D-transpeptidase MrdA (623 aa).

A helical membrane pass occupies residues 17–37 (VIVAFGVVVVCFGILIFNLYN). The active-site Acyl-ester intermediate is Ser326.

Belongs to the transpeptidase family. MrdA subfamily.

Its subcellular location is the cell inner membrane. It carries out the reaction Preferential cleavage: (Ac)2-L-Lys-D-Ala-|-D-Ala. Also transpeptidation of peptidyl-alanyl moieties that are N-acyl substituents of D-alanine.. Its pathway is cell wall biogenesis; peptidoglycan biosynthesis. In terms of biological role, catalyzes cross-linking of the peptidoglycan cell wall. This Salmonella typhimurium (strain SL1344) protein is Peptidoglycan D,D-transpeptidase MrdA.